Reading from the N-terminus, the 290-residue chain is Diaminopimelate epimerase (290 aa).

Substrate-binding residues include asparagine 17, glutamine 49, and asparagine 69. Residue cysteine 78 is the Proton donor of the active site. Substrate contacts are provided by residues 79-80 (GN), asparagine 166, asparagine 199, and 217-218 (ER). The active-site Proton acceptor is cysteine 226. 227–228 (GS) contacts substrate.

It belongs to the diaminopimelate epimerase family. As to quaternary structure, homodimer.

The protein localises to the cytoplasm. The enzyme catalyses (2S,6S)-2,6-diaminopimelate = meso-2,6-diaminopimelate. The protein operates within amino-acid biosynthesis; L-lysine biosynthesis via DAP pathway; DL-2,6-diaminopimelate from LL-2,6-diaminopimelate: step 1/1. Catalyzes the stereoinversion of LL-2,6-diaminopimelate (L,L-DAP) to meso-diaminopimelate (meso-DAP), a precursor of L-lysine and an essential component of the bacterial peptidoglycan. This Afipia carboxidovorans (strain ATCC 49405 / DSM 1227 / KCTC 32145 / OM5) (Oligotropha carboxidovorans) protein is Diaminopimelate epimerase.